The chain runs to 343 residues: N-acetyl-gamma-glutamyl-phosphate reductase (343 aa).

The active site involves Cys-146.

Belongs to the NAGSA dehydrogenase family. Type 1 subfamily.

Its subcellular location is the cytoplasm. It catalyses the reaction N-acetyl-L-glutamate 5-semialdehyde + phosphate + NADP(+) = N-acetyl-L-glutamyl 5-phosphate + NADPH + H(+). Its pathway is amino-acid biosynthesis; L-arginine biosynthesis; N(2)-acetyl-L-ornithine from L-glutamate: step 3/4. In terms of biological role, catalyzes the NADPH-dependent reduction of N-acetyl-5-glutamyl phosphate to yield N-acetyl-L-glutamate 5-semialdehyde. The protein is N-acetyl-gamma-glutamyl-phosphate reductase of Acidothermus cellulolyticus (strain ATCC 43068 / DSM 8971 / 11B).